A 473-amino-acid chain; its full sequence is tRNA modification GTPase MnmE (473 aa).

Residues R28, E93, and R132 each coordinate (6S)-5-formyl-5,6,7,8-tetrahydrofolate. One can recognise a TrmE-type G domain in the interval 228 to 394 (GVATVLVGSP…LKQQMSNMVA (167 aa)). GTP-binding positions include 238–243 (NAGKST), 257–263 (SHQPGTT), and 282–285 (DTAG). Residues S242 and T263 each coordinate Mg(2+). Residue K473 participates in (6S)-5-formyl-5,6,7,8-tetrahydrofolate binding.

Belongs to the TRAFAC class TrmE-Era-EngA-EngB-Septin-like GTPase superfamily. TrmE GTPase family. As to quaternary structure, homodimer. Heterotetramer of two MnmE and two MnmG subunits. K(+) serves as cofactor.

Its subcellular location is the cytoplasm. Its function is as follows. Exhibits a very high intrinsic GTPase hydrolysis rate. Involved in the addition of a carboxymethylaminomethyl (cmnm) group at the wobble position (U34) of certain tRNAs, forming tRNA-cmnm(5)s(2)U34. In Chlorobium chlorochromatii (strain CaD3), this protein is tRNA modification GTPase MnmE.